A 469-amino-acid chain; its full sequence is 3-isopropylmalate dehydratase large subunit 1 (469 aa).

C344, C404, and C407 together coordinate [4Fe-4S] cluster.

It belongs to the aconitase/IPM isomerase family. LeuC type 1 subfamily. In terms of assembly, heterodimer of LeuC and LeuD. The cofactor is [4Fe-4S] cluster.

It carries out the reaction (2R,3S)-3-isopropylmalate = (2S)-2-isopropylmalate. It participates in amino-acid biosynthesis; L-leucine biosynthesis; L-leucine from 3-methyl-2-oxobutanoate: step 2/4. In terms of biological role, catalyzes the isomerization between 2-isopropylmalate and 3-isopropylmalate, via the formation of 2-isopropylmaleate. This Rubrobacter xylanophilus (strain DSM 9941 / JCM 11954 / NBRC 16129 / PRD-1) protein is 3-isopropylmalate dehydratase large subunit 1.